A 52-amino-acid chain; its full sequence is Movement protein TGBp3 (52 aa).

The Lumenal portion of the chain corresponds to 1–3 (MHE). Residues 4–21 (SHLVVILALLLLALWCLS) traverse the membrane as a helical segment. Residues 22 to 52 (TRPVQPSCHVEINGHSIIVTGNCWHSTQRPH) are Cytoplasmic-facing.

This sequence belongs to the Tymovirales TGBp3 protein family.

Its subcellular location is the host endoplasmic reticulum membrane. Functionally, plays a role in viral cell-to-cell propagation, by facilitating genome transport to neighboring plant cells through plasmosdesmata. May induce the formation of granular vesicles derived from the Endoplasmic reticulum, which align on actin filaments. The protein is Movement protein TGBp3 of Foxtail mosaic virus.